The chain runs to 198 residues: Urease accessory protein UreE (198 aa).

Positions 137-198 are disordered; the sequence is ARGAYHSPGG…RGHDHDHKHD (62 aa). A compositionally biased stretch (basic and acidic residues) spans 149-198; sequence HGHDHDHNHDHGHDHAHDHNHGHDHDHEHGYEHEHEHRHDRGHDHDHKHD.

It belongs to the UreE family.

The protein resides in the cytoplasm. In terms of biological role, involved in urease metallocenter assembly. Binds nickel. Probably functions as a nickel donor during metallocenter assembly. In Rhizobium johnstonii (strain DSM 114642 / LMG 32736 / 3841) (Rhizobium leguminosarum bv. viciae), this protein is Urease accessory protein UreE.